A 230-amino-acid chain; its full sequence is Large ribosomal subunit protein uL1 (230 aa).

This sequence belongs to the universal ribosomal protein uL1 family. Part of the 50S ribosomal subunit.

Functionally, binds directly to 23S rRNA. The L1 stalk is quite mobile in the ribosome, and is involved in E site tRNA release. In terms of biological role, protein L1 is also a translational repressor protein, it controls the translation of the L11 operon by binding to its mRNA. This is Large ribosomal subunit protein uL1 from Bacillus anthracis (strain A0248).